We begin with the raw amino-acid sequence, 173 residues long: Adenine phosphoribosyltransferase (173 aa).

Belongs to the purine/pyrimidine phosphoribosyltransferase family. Homodimer.

It localises to the cytoplasm. The catalysed reaction is AMP + diphosphate = 5-phospho-alpha-D-ribose 1-diphosphate + adenine. It participates in purine metabolism; AMP biosynthesis via salvage pathway; AMP from adenine: step 1/1. Its function is as follows. Catalyzes a salvage reaction resulting in the formation of AMP, that is energically less costly than de novo synthesis. The protein is Adenine phosphoribosyltransferase of Listeria monocytogenes serotype 4b (strain CLIP80459).